The chain runs to 232 residues: tRNA (guanine-N(7)-)-methyltransferase (232 aa).

Residues glutamate 63, glutamate 88, aspartate 115, and aspartate 137 each coordinate S-adenosyl-L-methionine. Residue aspartate 137 is part of the active site. Substrate is bound by residues lysine 141, aspartate 173, and 211-214; that span reads TRYE.

The protein belongs to the class I-like SAM-binding methyltransferase superfamily. TrmB family.

The enzyme catalyses guanosine(46) in tRNA + S-adenosyl-L-methionine = N(7)-methylguanosine(46) in tRNA + S-adenosyl-L-homocysteine. It participates in tRNA modification; N(7)-methylguanine-tRNA biosynthesis. Functionally, catalyzes the formation of N(7)-methylguanine at position 46 (m7G46) in tRNA. This is tRNA (guanine-N(7)-)-methyltransferase from Agrobacterium fabrum (strain C58 / ATCC 33970) (Agrobacterium tumefaciens (strain C58)).